The sequence spans 314 residues: WD repeat-containing protein 38 (314 aa).

WD repeat units lie at residues 19-58, 61-100, 103-142, 145-184, 190-228, 231-272, and 274-312; these read QHGGEVNSSAFSPDGQMLLTGSEDGCVYGWETRSGQLLWR, GHTGPVKFCRFSPDGHLFASASCDCTVRLWDVARAKCLRV, GHQRSVETVSFSPDSRQLASGGWDKRVMLWDVQSGQMLRL, GHRDSIQSSDFSPTVNCLATGSWDSTVHIWDLRMVTPAVS, GHSANISCLCYSASGLLASGSWDKTIHIWKPTTSSLLIQ, GHVT…ETLK, and VLDVAHTCAFTPDGKILVSGAADQTRRQISRTSKSPRDP. A disordered region spans residues 294–314; sequence AADQTRRQISRTSKSPRDPQT.

This Homo sapiens (Human) protein is WD repeat-containing protein 38 (WDR38).